Here is a 776-residue protein sequence, read N- to C-terminus: Protein SEY1 (776 aa).

At 1 to 681 the chain is on the cytoplasmic side; sequence MADRSAIQLI…KRSIITTRTH (681 aa). The 230-residue stretch at 34 to 263 folds into the GB1/RHD3-type G domain; the sequence is GLDYHVISVF…TENYYFKPQY (230 aa). GTP is bound at residue 44 to 51; the sequence is GSQSSGKS. A helical transmembrane segment spans residues 682–702; sequence IPPWIYVLLAVLGWNEFVAVI. The Lumenal portion of the chain corresponds to 703-705; sequence RNP. The chain crosses the membrane as a helical span at residues 706-726; it reads LFVTLTLILGATFFVIHKFGL. The Cytoplasmic portion of the chain corresponds to 727-776; it reads WGPVVNVVQSAVGETRTAIKDKLRQFVVEDHEVKESFEMKDFSKNEQKEK.

The protein belongs to the TRAFAC class dynamin-like GTPase superfamily. GB1/RHD3 GTPase family. RHD3 subfamily. Interacts with RTN1 and YOP1; GTP binding is not required for these interactions.

It localises to the endoplasmic reticulum membrane. Functionally, cooperates with the reticulon proteins RTN1 and RTN2 and the tubule-shaping DP1 family protein YOP1 to generate and maintain the structure of the tubular endoplasmic reticulum network. Has GTPase activity, which is required for its function in ER organization. The chain is Protein SEY1 from Saccharomyces cerevisiae (strain RM11-1a) (Baker's yeast).